Here is a 687-residue protein sequence, read N- to C-terminus: Mitochondrial 15S rRNA processing factor ppr3 (687 aa).

The N-terminal 49 residues, 1–49 (MLNKCSGSLTLLAVRRFCGPCRRLHYHKDNPNNINIAKNLLNNNIQARC), are a transit peptide targeting the mitochondrion. PPR repeat units follow at residues 262–296 (NGLV…SITP), 297–331 (SKDF…ATSI), 334–368 (SAET…PIDP), and 372–407 (TTFV…GLRP).

It belongs to the CCM1 family. In terms of assembly, binds to mitochondrial small subunit 15S rRNA.

The protein resides in the mitochondrion. Regulates mitochondrial small subunit maturation by controlling 15S rRNA 5'-end processing. Localizes to the 5' precursor of the 15S rRNA in a position that is subsequently occupied by mS47 in the mature yeast mtSSU. Uses structure and sequence-specific RNA recognition, binding to a single-stranded region of the precursor and specifically recognizing bases -6 to -1. The exchange of Ccm1 for mS47 is coupled to the irreversible removal of precursor rRNA that is accompanied by conformational changes of the mitoribosomal proteins uS5m and mS26. These conformational changes signal completion of 5'-end rRNA processing through protection of the mature 5'-end of the 15S rRNA and stabilization of mS47. The removal of the 5' precursor together with the dissociation of Ccm1 may be catalyzed by the 5'-3' exoribonuclease Pet127. Involved in the specific removal of group I introns in mitochondrial encoded transcripts. This chain is Mitochondrial 15S rRNA processing factor ppr3, found in Schizosaccharomyces pombe (strain 972 / ATCC 24843) (Fission yeast).